The chain runs to 485 residues: Neuropeptide F receptor (485 aa).

At 1–91 the chain is on the extracellular side; the sequence is MIISMNQTEP…DSPWYHMLIS (91 aa). Residues 92–112 form a helical membrane-spanning segment; sequence MYGVLIVFGALGNTLVVIAVI. Over 113-122 the chain is Cytoplasmic; sequence RKPIMRTARN. Residues 123–143 traverse the membrane as a helical segment; the sequence is LFILNLAISDLLLCLVTMPLT. At 144-163 the chain is on the extracellular side; that stretch reads LMEILSKYWPYGSCSILCKT. An intrachain disulfide couples cysteine 161 to cysteine 248. Residues 164 to 184 form a helical membrane-spanning segment; the sequence is IAMLQALCIFVSTISITAIAF. Residues 185–202 are Cytoplasmic-facing; the sequence is DRYQVIVYPTRDSLQFVG. The helical transmembrane segment at 203–223 threads the bilayer; it reads AVTILAGIWALALLLASPLFV. Residues 224–262 are Extracellular-facing; it reads YKELINTDTPALLQQIGLQDTIPYCIEDWPSRNGRFYYS. A helical membrane pass occupies residues 263–283; that stretch reads IFSLCVQYLVPILIVSVAYFG. Topologically, residues 284–317 are cytoplasmic; it reads IYNKLKSRITVVAVQASSAQRKVERGRRMKRTNC. Residues 318-338 form a helical membrane-spanning segment; it reads LLISIAIIFGVSWLPLNFFNL. The Extracellular segment spans residues 339-355; that stretch reads YADMERSPVTQSMLVRY. Residues 356–376 form a helical membrane-spanning segment; it reads AICHMIGMSSACSNPLLYGWL. The Cytoplasmic segment spans residues 377–485; it reads NDNFRKEFQE…PSEVTKLMPR (109 aa).

It belongs to the G-protein coupled receptor 1 family. As to expression, expressed in midgut, brain lobes and ventral nerve cord of larvae. In adults, expressed in a pair of dorsolateral neurons in the protocerebrum, and the central complex and a small number of neurons in the subesophageal ganglion (at protein level). Expressed in a subset of sugar-responsive PAIN neurons in the thoracic body but is absent from other peripheral PAIN neurons.

It localises to the membrane. Receptor for NPF. Integral part of the sensory system that mediates food signaling, providing the neural basis for the regulation of food response; coordinates larval foraging and social behavior changes during development. Required in dopaminergic (DA) neurons that innervate the mushroom body for satiety to suppress appetitive memory performance; a key factor in the internal state of hunger in the brain. NPF neurons coordinately modulate diverse sensory and motor neurons important for feeding, flight, and locomotion. NPF/NPFR pathway exerts its suppressive effect on larval aversion to diverse stressful stimuli (chemical stress and noxious heat) through attenuation of TRP channel-induced neuronal excitation. NPF neural signaling system plays a physiological role in acute modulation of alcohol sensitivity in adults, rather than a general response to intoxication by sedative agents. Activation and inhibition of the NPF system reduces and enhances ethanol preference, respectively. Sexual experience, the NPF system activity and ethanol consumption are all linked; sexual deprivation is a major contributor to enhanced ethanol preference. The sequence is that of Neuropeptide F receptor from Drosophila melanogaster (Fruit fly).